We begin with the raw amino-acid sequence, 102 residues long: Large ribosomal subunit protein bL21 (102 aa).

This sequence belongs to the bacterial ribosomal protein bL21 family. Part of the 50S ribosomal subunit. Contacts protein L20.

Functionally, this protein binds to 23S rRNA in the presence of protein L20. The chain is Large ribosomal subunit protein bL21 from Leptospira biflexa serovar Patoc (strain Patoc 1 / Ames).